The primary structure comprises 532 residues: MTKYIFVTGGVVSSIGKGITAASLGRLLKNRGLSVTIQKFDPYINVDPGTMSPYQHGEVYVTDDGAETDLDLGHYERFIDINLNKYSNVTTGKVYSEVIKKERRGDYLGGTVQVIPHITNELKDRVFRAARMTNSDIIITEIGGTVGDIESLPFLEAIRQIKGDVGAENVLYIHTTLIPYIKAAGEMKTKPTQHSVKELRSLGIQPNIIVVRTEQPVSQEMKDKIALFCDIKASEVIESRDEETLYNVPLSLQKQKMDDIVLEHLQLEAPQAEMTDWKNLVHRVKNLSKKVRIGLVGKYVSLQDAYLSVAEALRHAGYDHDAEIEIDWIDSEKVTKENVAEIMKDVDGILVPGGFGDRAIEGKIAAIEYARVNKVPYFGICLGMQLATVEFARNVLGLEGAHSAEIEPETNHNIIDLLPEQKNIENMGGTLRLGLYPARIKQGTKAEAAYGTTLVEERHRHRYEFNNEYREQMEEAGMIVSATSPDGRLVEVVELIDHPWFVACQYHPEFISRPNRPQSLFKDFVGAALKNK.

Positions 1–267 (MTKYIFVTGG…DDIVLEHLQL (267 aa)) are amidoligase domain. Ser-13 contributes to the CTP binding site. Ser-13 is a binding site for UTP. 14 to 19 (SIGKGI) contacts ATP. Tyr-54 is an L-glutamine binding site. Asp-71 provides a ligand contact to ATP. 2 residues coordinate Mg(2+): Asp-71 and Glu-141. Residues 148-150 (DIE), 188-193 (KTKPTQ), and Lys-224 contribute to the CTP site. UTP-binding positions include 188-193 (KTKPTQ) and Lys-224. One can recognise a Glutamine amidotransferase type-1 domain in the interval 292 to 532 (RIGLVGKYVS…DFVGAALKNK (241 aa)). Gly-354 lines the L-glutamine pocket. Residue Cys-381 is the Nucleophile; for glutamine hydrolysis of the active site. Residues 382 to 385 (LGMQ), Glu-405, and Arg-462 contribute to the L-glutamine site. Residues His-507 and Glu-509 contribute to the active site.

This sequence belongs to the CTP synthase family. As to quaternary structure, homotetramer.

The catalysed reaction is UTP + L-glutamine + ATP + H2O = CTP + L-glutamate + ADP + phosphate + 2 H(+). The enzyme catalyses L-glutamine + H2O = L-glutamate + NH4(+). It carries out the reaction UTP + NH4(+) + ATP = CTP + ADP + phosphate + 2 H(+). The protein operates within pyrimidine metabolism; CTP biosynthesis via de novo pathway; CTP from UDP: step 2/2. With respect to regulation, allosterically activated by GTP, when glutamine is the substrate; GTP has no effect on the reaction when ammonia is the substrate. The allosteric effector GTP functions by stabilizing the protein conformation that binds the tetrahedral intermediate(s) formed during glutamine hydrolysis. Inhibited by the product CTP, via allosteric rather than competitive inhibition. Functionally, catalyzes the ATP-dependent amination of UTP to CTP with either L-glutamine or ammonia as the source of nitrogen. Regulates intracellular CTP levels through interactions with the four ribonucleotide triphosphates. This chain is CTP synthase, found in Listeria monocytogenes serovar 1/2a (strain ATCC BAA-679 / EGD-e).